The chain runs to 130 residues: MNGKYYYGTGRRKSSVARVFLIKGTGQIIVNGRPVDEFFARETSRMVVRQPLVLTENAESFDIKVNVVGGGETGQSGAIRHGITRALIDFDAALKPALSQAGFVTRDAREVERKKPGLRKARRAKQFSKR.

This sequence belongs to the universal ribosomal protein uS9 family.

The polypeptide is Small ribosomal subunit protein uS9 (Neisseria meningitidis serogroup C (strain 053442)).